Here is a 336-residue protein sequence, read N- to C-terminus: UbiA prenyltransferase domain-containing protein 1 (336 aa).

A2 carries the post-translational modification N-acetylalanine. 8 helical membrane passes run L81–T101, F132–A152, L158–F178, L186–G206, S207–L227, I243–V265, T275–E295, and L313–L333.

This sequence belongs to the UbiA prenyltransferase family. In terms of assembly, interacts with HMGCR and SOAT1.

It localises to the endoplasmic reticulum membrane. Its subcellular location is the golgi apparatus membrane. The protein resides in the mitochondrion membrane. It carries out the reaction menadiol + (2E,6E,10E)-geranylgeranyl diphosphate = menaquinol-4 + diphosphate. The enzyme catalyses all-trans-decaprenyl diphosphate + 4-hydroxybenzoate = 4-hydroxy-3-(all-trans-decaprenyl)benzoate + diphosphate. The protein operates within quinol/quinone metabolism; menaquinone biosynthesis. Its pathway is cofactor biosynthesis; ubiquinone biosynthesis. In terms of biological role, prenyltransferase that mediates the formation of menaquinone-4 (MK-4) and coenzyme Q10. MK-4 is a vitamin K2 isoform required for endothelial cell development. Mediates the conversion of phylloquinone (PK) into MK-4, probably by cleaving the side chain of phylloquinone (PK) to release 2-methyl-1,4-naphthoquinone (menadione; K3) and then prenylating it with geranylgeranyl pyrophosphate (GGPP) to form MK-4. Also plays a role in cardiovascular development independently of MK-4 biosynthesis, by acting as a coenzyme Q10 biosynthetic enzyme: coenzyme Q10, also named ubiquinone, plays an important antioxidant role in the cardiovascular system. Mediates biosynthesis of coenzyme Q10 in the Golgi membrane, leading to protect cardiovascular tissues from NOS3/eNOS-dependent oxidative stress. In Mus musculus (Mouse), this protein is UbiA prenyltransferase domain-containing protein 1 (Ubiad1).